The chain runs to 334 residues: Mevalonate kinase (334 aa).

110–120 contributes to the ATP binding site; that stretch reads PVGAGLGSSAA. The active-site Proton acceptor is the D161.

It belongs to the GHMP kinase family. Mevalonate kinase subfamily. Homodimer. It depends on Mg(2+) as a cofactor.

The protein resides in the cytoplasm. It carries out the reaction (R)-mevalonate + ATP = (R)-5-phosphomevalonate + ADP + H(+). Its pathway is isoprenoid biosynthesis; isopentenyl diphosphate biosynthesis via mevalonate pathway; isopentenyl diphosphate from (R)-mevalonate: step 1/3. Functionally, catalyzes the phosphorylation of (R)-mevalonate (MVA) to (R)-mevalonate 5-phosphate (MVAP). Functions in the mevalonate (MVA) pathway leading to isopentenyl diphosphate (IPP), a key precursor for the biosynthesis of isoprenoid compounds such as archaeal membrane lipids. This Pyrococcus furiosus (strain ATCC 43587 / DSM 3638 / JCM 8422 / Vc1) protein is Mevalonate kinase.